A 275-amino-acid chain; its full sequence is U6 snRNA phosphodiesterase 1 (275 aa).

The tract at residues 1–25 is disordered; that stretch reads MEFLKHYEDDEDQDDENNTKDENVN. Catalysis depends on His122, which acts as the Proton acceptor. AMP contacts are provided by residues 122–124, Tyr206, and 208–214; these read HIS and NPEPHLS. Residues Tyr206 and 210–214 contribute to the UMP site; that span reads EPHLS. His212 (proton donor) is an active-site residue.

The protein belongs to the 2H phosphoesterase superfamily. USB1 family.

It is found in the nucleus. It carries out the reaction a 3'-end uridylyl-uridine-RNA = a 3'-end 2',3'-cyclophospho-uridine-RNA + uridine. Its function is as follows. 3'-5' RNA exonuclease that trims the 3' end of oligo(U) tracts of the pre-U6 small nuclear RNA (snRNA) molecule, leading to the formation of a mature U6 snRNA 3' end-terminated with a 2',3'-cyclic phosphate. Participates in the U6 snRNA 3' end processing that prevents U6 snRNA degradation. In Dictyostelium discoideum (Social amoeba), this protein is U6 snRNA phosphodiesterase 1.